The following is a 146-amino-acid chain: uncharacterized protein (146 aa).

The span at 119–128 shows a compositional bias: basic and acidic residues; sequence AQADLEHEES. Positions 119 to 146 are disordered; the sequence is AQADLEHEESASIDQDEMVAIETRKTKK.

This is an uncharacterized protein from Schizosaccharomyces pombe (strain 972 / ATCC 24843) (Fission yeast).